A 270-amino-acid polypeptide reads, in one-letter code: Hemin import ATP-binding protein HmuV (270 aa).

Positions 2–238 (LTVENIEVTL…VTLSQAYGCT (237 aa)) constitute an ABC transporter domain. 34 to 41 (GHNGSGKT) contacts ATP.

This sequence belongs to the ABC transporter superfamily. Heme (hemin) importer (TC 3.A.1.14.5) family. As to quaternary structure, the complex is composed of two ATP-binding proteins (HmuV), two transmembrane proteins (HmuU) and a solute-binding protein (HmuT).

It localises to the cell inner membrane. Part of the ABC transporter complex HmuTUV involved in hemin import. Responsible for energy coupling to the transport system. This chain is Hemin import ATP-binding protein HmuV, found in Jannaschia sp. (strain CCS1).